The chain runs to 177 residues: MNLTYRAAEGVAESNHLLLANMIVTIVVFLLLLILLKKFAWGPLVNMMKAREEHVASEINSAEKSRKDAEVYVEQQQAELNKARTEARDLLEASRRQAEAEQARAMEQARVETELSKEEARRAIERERAEAQAALKNDVALQAIAAARHVMKTQLATDEAAQRALVDQFLADTKGTN.

Residues 16-36 (HLLLANMIVTIVVFLLLLILL) form a helical membrane-spanning segment.

It belongs to the ATPase B chain family. F-type ATPases have 2 components, F(1) - the catalytic core - and F(0) - the membrane proton channel. F(1) has five subunits: alpha(3), beta(3), gamma(1), delta(1), epsilon(1). F(0) has three main subunits: a(1), b(2) and c(10-14). The alpha and beta chains form an alternating ring which encloses part of the gamma chain. F(1) is attached to F(0) by a central stalk formed by the gamma and epsilon chains, while a peripheral stalk is formed by the delta and b chains.

The protein localises to the cell membrane. F(1)F(0) ATP synthase produces ATP from ADP in the presence of a proton or sodium gradient. F-type ATPases consist of two structural domains, F(1) containing the extramembraneous catalytic core and F(0) containing the membrane proton channel, linked together by a central stalk and a peripheral stalk. During catalysis, ATP synthesis in the catalytic domain of F(1) is coupled via a rotary mechanism of the central stalk subunits to proton translocation. In terms of biological role, component of the F(0) channel, it forms part of the peripheral stalk, linking F(1) to F(0). This is ATP synthase subunit b from Exiguobacterium sibiricum (strain DSM 17290 / CCUG 55495 / CIP 109462 / JCM 13490 / 255-15).